The chain runs to 594 residues: DNA ligase (594 aa).

Residue Glu-280 coordinates ATP. Lys-282 acts as the N6-AMP-lysine intermediate in catalysis. Residues Arg-287, Arg-316, Glu-345, Phe-385, Arg-456, and Lys-462 each coordinate ATP.

It belongs to the ATP-dependent DNA ligase family. Mg(2+) is required as a cofactor.

It catalyses the reaction ATP + (deoxyribonucleotide)n-3'-hydroxyl + 5'-phospho-(deoxyribonucleotide)m = (deoxyribonucleotide)n+m + AMP + diphosphate.. Its function is as follows. DNA ligase that seals nicks in double-stranded DNA during DNA replication, DNA recombination and DNA repair. This Halorubrum lacusprofundi (strain ATCC 49239 / DSM 5036 / JCM 8891 / ACAM 34) protein is DNA ligase.